A 326-amino-acid polypeptide reads, in one-letter code: Histone-lysine N-methyltransferase Suv4-20 (326 aa).

The 111-residue stretch at 163–273 folds into the SET domain; that stretch reads QECTRYSLEG…AGDEITCFYG (111 aa). Positions 294 to 313 are disordered; it reads RGKFSTSDEEENDEPSALSE.

It belongs to the class V-like SAM-binding methyltransferase superfamily. Histone-lysine methyltransferase family. Suvar4-20 subfamily.

The protein resides in the nucleus. It is found in the chromosome. It catalyses the reaction N(6)-methyl-L-lysyl(20)-[histone H4] + S-adenosyl-L-methionine = N(6),N(6)-dimethyl-L-lysyl(20)-[histone H4] + S-adenosyl-L-homocysteine + H(+). It carries out the reaction N(6),N(6)-dimethyl-L-lysyl(20)-[histone H4] + S-adenosyl-L-methionine = N(6),N(6),N(6)-trimethyl-L-lysyl(20)-[histone H4] + S-adenosyl-L-homocysteine + H(+). In terms of biological role, histone methyltransferase that specifically di- and trimethylates 'Lys-20' of histone H4 (H4K20me2/me3). H4 'Lys-20' trimethylation represents a specific tag for epigenetic transcriptional repression. Contributes to dosage compensation of X chromosome-relative to autosome-linked gene expression, possibly by converting H4K20me1 to H4K20m2/me3 on autosomes. Involved in the regulation of growth and body fat metabolism downstream of the TOR complex 2 pathway. The chain is Histone-lysine N-methyltransferase Suv4-20 from Caenorhabditis briggsae.